The primary structure comprises 643 residues: Thread biopolymer filament subunit alpha (643 aa).

The span at 1–13 (MSISQTVSKSYTK) shows a compositional bias: polar residues. Residues 1-34 (MSISQTVSKSYTKSVSRGGQGVSYSQSSSHKVGG) form a disordered region. The interval 1–191 (MSISQTVSKS…PDTVQHTRIR (191 aa)) is head. Low complexity predominate over residues 14-31 (SVSRGGQGVSYSQSSSHK). An IF rod domain is found at 192–510 (EKQDLQTLNT…KLLDSEETRI (319 aa)). A coil 1A region spans residues 193 to 227 (KQDLQTLNTKFANLVDQVRTLEQHNAILKAQISMI). Residues 228-240 (TSPSDTPEGPVNT) form a linker 1 region. The tract at residues 241-341 (AVVASTVTAT…YNARVREVQA (101 aa)) is coil 1B. The interval 342–362 (AVTGGPTAAYSIRVDNTHQAI) is linker 12. The coil 2A stretch occupies residues 363-381 (DLTTSLQEMKTHYEVLATK). Residues 382–389 (SREEAFTQ) form a linker 2 region. The tract at residues 390 to 510 (VQPRIQEMAV…KLLDSEETRI (121 aa)) is coil 2B. A tail region spans residues 511–643 (SHGGGITITT…SSARSSSRIY (133 aa)). A disordered region spans residues 622–643 (SRAGYSASRKSYSSARSSSRIY).

The protein belongs to the intermediate filament family. In terms of assembly, coiled-coil heterodimer of an alpha and a gamma subunit. Assemble into 10 nm filaments. Forms a massive, conical, intermediate filament biopolymer of approximately 60 cm.

It localises to the secreted. The protein resides in the extracellular space. In terms of biological role, released extracellularly into seawater and provides physical and biological defense against invasive organism by modulation of the viscoelastic properties of mucus. This Eptatretus stoutii (Pacific hagfish) protein is Thread biopolymer filament subunit alpha.